The sequence spans 453 residues: MRECISIHIGQAGIQTGNACWELYCLEHGIQPDGQMPSDKTIGGGDDAFNTFFSETGAGKHVPRAVYVDLEPTVCDEVRTGTYRQLYHPEQIISGKEDAANNYARGHYTIGKEIVDLVLDRIRKLADNCTGLQGFLVFHATGGGTGSGLGSLLLERLSVDYGRKSKLSFAITPAPQVATAVVEPYNSVLSTHALLEHTDCTFCLDNEALYDVCRRNLDIERPTYTNLNRLVAQVISSLTASLRFDGALNVDVTEFQTNLVPYPRIHFMLTSYAPIISAEKAYHEQLSVAEITNSVFEPAGMMTNCDPRHGKYMACCLMYRGDVVPKDVNAAVATIKTKRTIQFVDWCPTGFKCGINYQPPTVVPGGDLARVQRAVCMVANTTAIAEALSRIDHKFDLMYAKRAFVHWYVGEGMEEGEFSEAREDLAALEKDYEEVGAETAEGEGEEEDFGEEY.

Q11 is a binding site for GTP. The residue at position 40 (K40) is an N6-acetyllysine. E71, G144, T145, T179, N206, and N228 together coordinate GTP. A Mg(2+)-binding site is contributed by E71. E254 is an active-site residue. Residues 432 to 453 (YEEVGAETAEGEGEEEDFGEEY) are disordered.

The protein belongs to the tubulin family. As to quaternary structure, dimer of alpha and beta chains. A typical microtubule is a hollow water-filled tube with an outer diameter of 25 nm and an inner diameter of 15 nM. Alpha-beta heterodimers associate head-to-tail to form protofilaments running lengthwise along the microtubule wall with the beta-tubulin subunit facing the microtubule plus end conferring a structural polarity. Microtubules usually have 13 protofilaments but different protofilament numbers can be found in some organisms and specialized cells. It depends on Mg(2+) as a cofactor. Undergoes a tyrosination/detyrosination cycle, the cyclic removal and re-addition of a C-terminal tyrosine residue by the enzymes tubulin tyrosine carboxypeptidase (TTCP) and tubulin tyrosine ligase (TTL), respectively. Post-translationally, acetylation of alpha chains at Lys-40 stabilizes microtubules and affects affinity and processivity of microtubule motors. This modification has a role in multiple cellular functions, ranging from cell motility, cell cycle progression or cell differentiation to intracellular trafficking and signaling.

The protein localises to the cytoplasm. Its subcellular location is the cytoskeleton. It catalyses the reaction GTP + H2O = GDP + phosphate + H(+). Tubulin is the major constituent of microtubules, a cylinder consisting of laterally associated linear protofilaments composed of alpha- and beta-tubulin heterodimers. Microtubules grow by the addition of GTP-tubulin dimers to the microtubule end, where a stabilizing cap forms. Below the cap, tubulin dimers are in GDP-bound state, owing to GTPase activity of alpha-tubulin. In Pelvetia fastigiata (Brown alga), this protein is Tubulin alpha-2 chain (TUBA2).